Here is a 211-residue protein sequence, read N- to C-terminus: External core antigen (211 aa).

The first 19 residues, 1-19 (MHLFHLCLIILCSCPTVQA), serve as a signal peptide directing secretion. The interval 25–27 (GWL) is HBEAG. The tract at residues 165 to 211 (NAPILSTLPETTVVRRRRPSGRRTPSPRRRRSQSPRRRRSQSPASSC) is disordered. Residues 178 to 204 (VRRRRPSGRRTPSPRRRRSQSPRRRRS) show a composition bias toward basic residues. A 1; half-length repeat occupies 183–189 (PSGRRTP). Residues 183-205 (PSGRRTPSPRRRRSQSPRRRRSQ) are 3 X 8 AA repeats of S-P-R-R-R-R-S-Q. Residues 183–211 (PSGRRTPSPRRRRSQSPRRRRSQSPASSC) constitute a propeptide that is removed on maturation. 2 repeat units span residues 190–197 (SPRRRRSQ) and 198–205 (SPRRRRSQ).

This sequence belongs to the orthohepadnavirus precore antigen family. As to quaternary structure, homodimerizes. Phosphorylated. In terms of processing, cleaved by host furin.

The protein localises to the secreted. It localises to the host nucleus. In terms of biological role, may regulate immune response to the intracellular capsid in acting as a T-cell tolerogen, by having an immunoregulatory effect which prevents destruction of infected cells by cytotoxic T-cells. This immune regulation may predispose to chronicity during perinatal infections and prevent severe liver injury during adult infections. The sequence is that of External core antigen from Woolly monkey hepatitis B virus (isolate Louisville) (WMHBV).